A 496-amino-acid chain; its full sequence is MSEEMNDQMQVRRQKLQELIDLGIDPFGKRFERSATASELKSQWDEFSKEELHDKEDESHVSIAGRLMTKRGKGKAGFAHVQDLTGQIQIYVRKDQIGEEDFDNLWKGADLGDIVGIEGVMFKTNTGELSVKAKTFTLLSKALRPLPDKFHGLQDIEQRYRQRYLDLITNQDSTQTFINRSKIIQEMRNYLNKQGFLEVETPMMHQIAGGAAARPFVTHHNALDATLYMRIAIELHLKRLIVGGLEKVYEIGRVFRNEGVSTRHNPEFTMIELYEAYADYHDIMDLTESMVRHIAQEVFGSAKVQYNEEEIDLESAWTRLHIVDAVKEATGVDFYQIKSDEEAIAAAKEHGIEITNNMKYGHILNEFFEQKVEETLIQPTFIYGHPIEISPLAKKNPEDPRFTDRFELFIVGREHANAFTELNDPIDQRERFEAQLVEKAQGNDEAHEMDEDYIEALEYGMPPTGGLGIGIDRLVMLLTDSPSIRDVLLFPYMRQK.

Glu407 and Glu414 together coordinate Mg(2+).

It belongs to the class-II aminoacyl-tRNA synthetase family. Homodimer. Mg(2+) serves as cofactor.

It is found in the cytoplasm. It carries out the reaction tRNA(Lys) + L-lysine + ATP = L-lysyl-tRNA(Lys) + AMP + diphosphate. The protein is Lysine--tRNA ligase of Staphylococcus haemolyticus (strain JCSC1435).